A 971-amino-acid polypeptide reads, in one-letter code: DNA-directed RNA polymerase subunit Rpo1N (971 aa).

Residue Met-1 is modified to Blocked amino end (Met). The Zn(2+) site is built by Cys-62, Cys-65, Cys-72, His-75, Cys-102, Cys-105, Cys-149, and Cys-152. Positions Ser-185 to Glu-204 are disordered. 3 residues coordinate Mg(2+): Asp-527, Asp-529, and Asp-531. The interval Val-951 to Asp-971 is disordered.

Belongs to the RNA polymerase beta' chain family. As to quaternary structure, part of the RNA polymerase complex. The cofactor is Mg(2+). Zn(2+) is required as a cofactor. Post-translationally, the N-terminus is blocked.

It localises to the cytoplasm. It catalyses the reaction RNA(n) + a ribonucleoside 5'-triphosphate = RNA(n+1) + diphosphate. In terms of biological role, DNA-dependent RNA polymerase (RNAP) catalyzes the transcription of DNA into RNA using the four ribonucleoside triphosphates as substrates. Forms the clamp head domain. The sequence is that of DNA-directed RNA polymerase subunit Rpo1N from Halobacterium salinarum (strain ATCC 29341 / DSM 671 / R1).